The primary structure comprises 2169 residues: Protein sidekick-1 (2169 aa).

The N-terminal stretch at 1 to 50 (MVGRKVDREIIARRNSRRDGMMMKLNFCFFFCRRWWAFLLLQLHMLQALA) is a signal peptide. The Extracellular segment spans residues 51-1961 (QDDVAPYFKT…TEAPFYEEWW (1911 aa)). 5 consecutive Ig-like C2-type domains span residues 56–138 (PYFK…SEVQ), 143–229 (GNFM…SPLI), 245–333 (PIIV…AFIS), 338–428 (PYFT…LDVT), and 432–521 (PAFI…VMLT). Cysteine 78 and cysteine 121 are joined by a disulfide. Residues asparagine 93, asparagine 223, and asparagine 253 are each glycosylated (N-linked (GlcNAc...) asparagine). Disulfide bonds link cysteine 267/cysteine 314, cysteine 360/cysteine 410, and cysteine 453/cysteine 505. Asparagine 502, asparagine 524, and asparagine 534 each carry an N-linked (GlcNAc...) asparagine glycan. The 91-residue stretch at 525–615 (RTFIVHPPEN…GNDSRMARLE (91 aa)) folds into the Ig-like C2-type 6 domain. A disulfide bridge connects residues cysteine 547 and cysteine 599. Residues asparagine 607, asparagine 631, asparagine 734, asparagine 773, asparagine 834, asparagine 967, and asparagine 977 are each glycosylated (N-linked (GlcNAc...) asparagine). Fibronectin type-III domains lie at 622-718 (SPQN…LPEE), 723-819 (PPKN…TLQG), 824-922 (PPQN…TLED), 926-1020 (AVGH…VPPE), 1024-1123 (APSN…TLQA), 1128-1226 (APGS…TRES), 1231-1328 (PPEN…TKDD), 1332-1426 (PPIR…TEKR), 1431-1528 (PPQQ…TLQD), 1533-1651 (PPSS…VGEA), 1656-1752 (APQN…THQA), 1756-1851 (APSF…AGPA), and 1854-1955 (SPGS…TEAP). Residues asparagine 1234 and asparagine 1285 are each glycosylated (N-linked (GlcNAc...) asparagine). Positions 1423–1443 (TEKRERPAPPQQLTTPQSDVS) are disordered. Residues 1433–1443 (QQLTTPQSDVS) show a composition bias toward polar residues. N-linked (GlcNAc...) asparagine glycosylation is found at asparagine 1606, asparagine 1700, asparagine 1719, asparagine 1771, and asparagine 1845. Residues 1962–1982 (FLLVMALSSLILILLVVFALV) form a helical membrane-spanning segment. Residues 1983–2169 (LHGQSKKYKN…TPVTGFSSFV (187 aa)) lie on the Cytoplasmic side of the membrane. 2 disordered regions span residues 2028 to 2050 (TFSK…HYSD) and 2145 to 2169 (GGVY…SSFV). The segment covering 2160–2169 (TPVTGFSSFV) has biased composition (polar residues). A PDZ-binding motif is present at residues 2163–2169 (TGFSSFV).

This sequence belongs to the sidekick family. In terms of assembly, homodimer; mediates homophilic interactions to promote cell adhesion. As to expression, expressed by non-overlapping subsets of retinal neurons. SDK1, SDK2, DSCAM and DSCAML1 are expressed in non-overlapping subsets of interneurons and retinal ganglion cells (RGCs) that form synapses in distinct inner plexiform layer (IPL) sublaminae.

The protein localises to the cell membrane. The protein resides in the synapse. Functionally, adhesion molecule that promotes lamina-specific synaptic connections in the retina. Expressed in specific subsets of interneurons and retinal ganglion cells (RGCs) and promotes synaptic connectivity via homophilic interactions. This Gallus gallus (Chicken) protein is Protein sidekick-1.